Consider the following 126-residue polypeptide: Histone H2B type 1-N (126 aa).

Positions 1 to 12 (MPEPSKSAPAPK) are enriched in low complexity. Residues 1–36 (MPEPSKSAPAPKKGSKKAVTKAQKKDGKKRKRSRKE) are disordered. N-acetylproline is present on P2. Residue E3 is modified to ADP-ribosyl glutamic acid. K6 carries the N6-(2-hydroxyisobutyryl)lysine; alternate modification. K6 carries the post-translational modification N6-(beta-hydroxybutyryl)lysine; alternate. K6 bears the N6-acetyllysine; alternate mark. An N6-butyryllysine; alternate modification is found at K6. K6 is modified (N6-crotonyllysine; alternate). At K6 the chain carries N6-lactoyllysine; alternate. K6 is covalently cross-linked (Glycyl lysine isopeptide (Lys-Gly) (interchain with G-Cter in SUMO2); alternate). S7 bears the ADP-ribosylserine mark. K12 bears the N6-(beta-hydroxybutyryl)lysine; alternate mark. N6-acetyllysine; alternate is present on residues K12 and K13. K12 and K13 each carry N6-crotonyllysine; alternate. An N6-lactoyllysine; alternate modification is found at K12. K13 carries the post-translational modification N6-(2-hydroxyisobutyryl)lysine; alternate. At S15 the chain carries Phosphoserine; by STK4/MST1. N6-acetyllysine; alternate is present on residues K16, K17, K21, and K24. 4 positions are modified to N6-crotonyllysine; alternate: K16, K17, K21, and K24. N6-lactoyllysine; alternate is present on residues K16, K17, K21, and K24. N6-(beta-hydroxybutyryl)lysine; alternate is present on residues K17 and K21. Residue K17 is modified to N6-glutaryllysine; alternate. 2 positions are modified to N6-(2-hydroxyisobutyryl)lysine; alternate: K21 and K24. Residue K21 is modified to N6-butyryllysine; alternate. K21 is covalently cross-linked (Glycyl lysine isopeptide (Lys-Gly) (interchain with G-Cter in SUMO2); alternate). K25 carries the post-translational modification N6-(2-hydroxyisobutyryl)lysine. N6-(2-hydroxyisobutyryl)lysine; alternate is present on K35. At K35 the chain carries N6-(beta-hydroxybutyryl)lysine; alternate. Residue K35 is modified to N6-crotonyllysine; alternate. K35 carries the N6-glutaryllysine; alternate modification. K35 carries the post-translational modification N6-succinyllysine; alternate. A Glycyl lysine isopeptide (Lys-Gly) (interchain with G-Cter in ubiquitin); alternate cross-link involves residue K35. Position 36 is a polyADP-ribosyl glutamic acid (E36). S37 bears the Phosphoserine; by AMPK mark. K44, K47, and K58 each carry N6-(2-hydroxyisobutyryl)lysine; alternate. N6-lactoyllysine; alternate is present on K44. N6-glutaryllysine; alternate is present on residues K44 and K47. K47 carries the post-translational modification N6-methyllysine; alternate. K58 carries the post-translational modification N6,N6-dimethyllysine; alternate. Position 80 is a dimethylated arginine (R80). K86 bears the N6-(2-hydroxyisobutyryl)lysine; alternate mark. K86 carries the post-translational modification N6-(beta-hydroxybutyryl)lysine; alternate. Position 86 is an N6-acetyllysine; alternate (K86). The residue at position 86 (K86) is an N6-lactoyllysine; alternate. The residue at position 86 (K86) is an N6,N6,N6-trimethyllysine; alternate. R87 and R93 each carry omega-N-methylarginine. K109 is modified (N6-(2-hydroxyisobutyryl)lysine; alternate). K109 carries the N6-lactoyllysine; alternate modification. Position 109 is an N6-glutaryllysine; alternate (K109). K109 is subject to N6-methyllysine; alternate. O-linked (GlcNAc) serine glycosylation is present at S113. T116 carries the post-translational modification Phosphothreonine. N6-(2-hydroxyisobutyryl)lysine; alternate occurs at positions 117 and 121. An N6-(beta-hydroxybutyryl)lysine; alternate mark is found at K117 and K121. 2 positions are modified to N6-lactoyllysine; alternate: K117 and K121. Residues K117 and K121 each carry the N6-glutaryllysine; alternate modification. 2 positions are modified to N6-succinyllysine; alternate: K117 and K121. N6-malonyllysine; alternate is present on K117. N6-methylated lysine; alternate is present on K117. A Glycyl lysine isopeptide (Lys-Gly) (interchain with G-Cter in ubiquitin); alternate cross-link involves residue K121.

This sequence belongs to the histone H2B family. The nucleosome is a histone octamer containing two molecules each of H2A, H2B, H3 and H4 assembled in one H3-H4 heterotetramer and two H2A-H2B heterodimers. The octamer wraps approximately 147 bp of DNA. In terms of processing, monoubiquitination at Lys-35 (H2BK34Ub) by the MSL1/MSL2 dimer is required for histone H3 'Lys-4' (H3K4me) and 'Lys-79' (H3K79me) methylation and transcription activation at specific gene loci, such as HOXA9 and MEIS1 loci. Similarly, monoubiquitination at Lys-121 (H2BK120Ub) by the RNF20/40 complex gives a specific tag for epigenetic transcriptional activation and is also prerequisite for histone H3 'Lys-4' and 'Lys-79' methylation. It also functions cooperatively with the FACT dimer to stimulate elongation by RNA polymerase II. H2BK120Ub also acts as a regulator of mRNA splicing: deubiquitination by USP49 is required for efficient cotranscriptional splicing of a large set of exons. Post-translationally, phosphorylation at Ser-37 (H2BS36ph) by AMPK in response to stress promotes transcription. Phosphorylated on Ser-15 (H2BS14ph) by STK4/MST1 during apoptosis; which facilitates apoptotic chromatin condensation. Also phosphorylated on Ser-15 in response to DNA double strand breaks (DSBs), and in correlation with somatic hypermutation and immunoglobulin class-switch recombination. GlcNAcylation at Ser-113 promotes monoubiquitination of Lys-121. It fluctuates in response to extracellular glucose, and associates with transcribed genes. In terms of processing, ADP-ribosylated by PARP1 or PARP2 on Ser-7 (H2BS6ADPr) in response to DNA damage. H2BS6ADPr promotes recruitment of CHD1L. Mono-ADP-ribosylated on Glu-3 (H2BE2ADPr) by PARP3 in response to single-strand breaks. Poly ADP-ribosylation on Glu-36 (H2BE35ADPr) by PARP1 regulates adipogenesis: it inhibits phosphorylation at Ser-37 (H2BS36ph), thereby blocking expression of pro-adipogenetic genes. Post-translationally, crotonylation (Kcr) is specifically present in male germ cells and marks testis-specific genes in post-meiotic cells, including X-linked genes that escape sex chromosome inactivation in haploid cells. Crotonylation marks active promoters and enhancers and confers resistance to transcriptional repressors. It is also associated with post-meiotically activated genes on autosomes. Lactylated in macrophages by EP300/P300 by using lactoyl-CoA directly derived from endogenous or exogenous lactate, leading to stimulates gene transcription.

Its subcellular location is the nucleus. The protein resides in the chromosome. In terms of biological role, core component of nucleosome. Nucleosomes wrap and compact DNA into chromatin, limiting DNA accessibility to the cellular machineries which require DNA as a template. Histones thereby play a central role in transcription regulation, DNA repair, DNA replication and chromosomal stability. DNA accessibility is regulated via a complex set of post-translational modifications of histones, also called histone code, and nucleosome remodeling. This is Histone H2B type 1-N from Homo sapiens (Human).